A 387-amino-acid chain; its full sequence is Anhydro-N-acetylmuramic acid kinase (387 aa).

9–16 (GTSVDGID) contributes to the ATP binding site.

The protein belongs to the anhydro-N-acetylmuramic acid kinase family.

The enzyme catalyses 1,6-anhydro-N-acetyl-beta-muramate + ATP + H2O = N-acetyl-D-muramate 6-phosphate + ADP + H(+). Its pathway is amino-sugar metabolism; 1,6-anhydro-N-acetylmuramate degradation. The protein operates within cell wall biogenesis; peptidoglycan recycling. In terms of biological role, catalyzes the specific phosphorylation of 1,6-anhydro-N-acetylmuramic acid (anhMurNAc) with the simultaneous cleavage of the 1,6-anhydro ring, generating MurNAc-6-P. Is required for the utilization of anhMurNAc either imported from the medium or derived from its own cell wall murein, and thus plays a role in cell wall recycling. This is Anhydro-N-acetylmuramic acid kinase from Synechocystis sp. (strain ATCC 27184 / PCC 6803 / Kazusa).